The primary structure comprises 227 residues: Flagellar L-ring protein 2 (227 aa).

The N-terminal stretch at 1-17 (MKSKLAITMVSALLLAA) is a signal peptide. A lipid anchor (N-palmitoyl cysteine) is attached at cysteine 18. The S-diacylglycerol cysteine moiety is linked to residue cysteine 18.

This sequence belongs to the FlgH family. As to quaternary structure, the basal body constitutes a major portion of the flagellar organelle and consists of four rings (L,P,S, and M) mounted on a central rod.

It is found in the cell outer membrane. The protein localises to the bacterial flagellum basal body. Functionally, assembles around the rod to form the L-ring and probably protects the motor/basal body from shearing forces during rotation. The protein is Flagellar L-ring protein 2 of Chromobacterium violaceum (strain ATCC 12472 / DSM 30191 / JCM 1249 / CCUG 213 / NBRC 12614 / NCIMB 9131 / NCTC 9757 / MK).